The chain runs to 254 residues: Small ribosomal subunit protein uS2 (254 aa).

Belongs to the universal ribosomal protein uS2 family.

In Borrelia recurrentis (strain A1), this protein is Small ribosomal subunit protein uS2.